Reading from the N-terminus, the 648-residue chain is Forkhead box protein N1 (648 aa).

The interval M1–P95 is disordered. Polar residues predominate over residues A38–S50. A compositionally biased stretch (pro residues) spans D54–S67. The segment at residues K271–D367 is a DNA-binding region (fork-head). Disordered stretches follow at residues L392–P432, H457–P521, and S629–A648. A compositionally biased stretch (pro residues) spans G398–P412.

In terms of tissue distribution, bone marrow (at protein level). Expressed in thymus and skin.

It localises to the nucleus. Transcriptional regulator which regulates the development, differentiation, and function of thymic epithelial cells (TECs) both in the prenatal and postnatal thymus. Acts as a master regulator of the TECs lineage development and is required from the onset of differentiation in progenitor TECs in the developing fetus to the final differentiation steps through which TECs mature to acquire their full functionality. Regulates, either directly or indirectly the expression of a variety of genes that mediate diverse aspects of thymus development and function, including MHC Class II, DLL4, CCL25, CTSL, CD40 and PAX1. Regulates the differentiation of the immature TECs into functional cortical TECs (cTECs) and medullary TECs (mTECs). Essential for maintenance of mTECs population in the postnatal thymus. Involved in the morphogenesis and maintenance of the three-dimensional thymic microstructure which is necessary for a fully functional thymus. Plays an important role in the maintenance of hematopoiesis and particularly T lineage progenitors within the bone marrow niche with age. Essential for the vascularization of the thymus anlage. Promotes the terminal differentiation of epithelial cells in the epidermis and hair follicles, partly by negatively regulating the activity of protein kinase C. This Mus musculus (Mouse) protein is Forkhead box protein N1 (Foxn1).